The following is a 372-amino-acid chain: Ligninase C (372 aa).

Residues 1–26 (MAFKSLLSFVSVIGALQGANAALTRR) form the signal peptide. Catalysis depends on His74, which acts as the Proton acceptor. 4 residues coordinate Ca(2+): Asp75, Gly93, Asp95, and Ser97. An N-linked (GlcNAc...) asparagine glycan is attached at Asn129. Residue His205 participates in heme b binding. Positions 206, 223, 225, 228, and 230 each coordinate Ca(2+). A disordered region spans residues 346 to 372 (TPFPTFPTDPGPKTAVAPVPKPPAARK).

The protein belongs to the peroxidase family. Ligninase subfamily. Ca(2+) serves as cofactor. It depends on heme b as a cofactor.

It catalyses the reaction 1-(3,4-dimethoxyphenyl)-2-(2-methoxyphenoxy)propane-1,3-diol + H2O2 = 3,4-dimethoxybenzaldehyde + guaiacol + glycolaldehyde + H2O. It carries out the reaction 2 (3,4-dimethoxyphenyl)methanol + H2O2 = 2 (3,4-dimethoxyphenyl)methanol radical + 2 H2O. The protein operates within secondary metabolite metabolism; lignin degradation. In terms of biological role, depolymerization of lignin. Catalyzes the C(alpha)-C(beta) cleavage of the propyl side chains of lignin. In Trametes versicolor (White-rot fungus), this protein is Ligninase C.